The following is a 79-amino-acid chain: Cyclin-dependent kinases regulatory subunit 2 (79 aa).

Lys4 carries the N6-acetyllysine modification.

This sequence belongs to the CKS family. As to quaternary structure, forms a homohexamer that can probably bind six kinase subunits.

In terms of biological role, binds to the catalytic subunit of the cyclin dependent kinases and is essential for their biological function. This is Cyclin-dependent kinases regulatory subunit 2 (Cks2) from Mus musculus (Mouse).